A 332-amino-acid polypeptide reads, in one-letter code: DNA-directed RNA polymerase subunit alpha (332 aa).

Residues Met-1–Asn-226 are alpha N-terminal domain (alpha-NTD). The segment at Leu-243 to Ile-332 is alpha C-terminal domain (alpha-CTD).

This sequence belongs to the RNA polymerase alpha chain family. Homodimer. The RNAP catalytic core consists of 2 alpha, 1 beta, 1 beta' and 1 omega subunit. When a sigma factor is associated with the core the holoenzyme is formed, which can initiate transcription.

It carries out the reaction RNA(n) + a ribonucleoside 5'-triphosphate = RNA(n+1) + diphosphate. Functionally, DNA-dependent RNA polymerase catalyzes the transcription of DNA into RNA using the four ribonucleoside triphosphates as substrates. The sequence is that of DNA-directed RNA polymerase subunit alpha from Leifsonia xyli subsp. xyli (strain CTCB07).